A 242-amino-acid polypeptide reads, in one-letter code: Biosynthetic peptidoglycan transglycosylase (242 aa).

The helical transmembrane segment at 19 to 39 (LMVVLAVFWGGGIALFSVAPV) threads the bilayer.

This sequence belongs to the glycosyltransferase 51 family.

The protein resides in the cell inner membrane. It catalyses the reaction [GlcNAc-(1-&gt;4)-Mur2Ac(oyl-L-Ala-gamma-D-Glu-L-Lys-D-Ala-D-Ala)](n)-di-trans,octa-cis-undecaprenyl diphosphate + beta-D-GlcNAc-(1-&gt;4)-Mur2Ac(oyl-L-Ala-gamma-D-Glu-L-Lys-D-Ala-D-Ala)-di-trans,octa-cis-undecaprenyl diphosphate = [GlcNAc-(1-&gt;4)-Mur2Ac(oyl-L-Ala-gamma-D-Glu-L-Lys-D-Ala-D-Ala)](n+1)-di-trans,octa-cis-undecaprenyl diphosphate + di-trans,octa-cis-undecaprenyl diphosphate + H(+). It functions in the pathway cell wall biogenesis; peptidoglycan biosynthesis. Functionally, peptidoglycan polymerase that catalyzes glycan chain elongation from lipid-linked precursors. This chain is Biosynthetic peptidoglycan transglycosylase, found in Escherichia coli O139:H28 (strain E24377A / ETEC).